Consider the following 193-residue polypeptide: MSNISLIVGLGNPGSEYAQTRHNAGFWFVEQLADKYGITIKNDPKFHGISGRGNIEGHDVRLLLPMTYMNRSGQSVVPFSKFYQIAPEAILIAHDELDMNPGVIRLKTGGGHGGHNGLRDIVPHIGPNFHRLRIGIGHPGSKERVSGHVLGKAPSSEQSLMDGAIDHALSKVKLLVQGQVPQAMNQINAYKPA.

A tRNA-binding site is contributed by tyrosine 17. Histidine 22 acts as the Proton acceptor in catalysis. Tyrosine 68, asparagine 70, and asparagine 116 together coordinate tRNA.

It belongs to the PTH family. In terms of assembly, monomer.

It localises to the cytoplasm. The enzyme catalyses an N-acyl-L-alpha-aminoacyl-tRNA + H2O = an N-acyl-L-amino acid + a tRNA + H(+). In terms of biological role, hydrolyzes ribosome-free peptidyl-tRNAs (with 1 or more amino acids incorporated), which drop off the ribosome during protein synthesis, or as a result of ribosome stalling. Functionally, catalyzes the release of premature peptidyl moieties from peptidyl-tRNA molecules trapped in stalled 50S ribosomal subunits, and thus maintains levels of free tRNAs and 50S ribosomes. In Acinetobacter baumannii (strain AB0057), this protein is Peptidyl-tRNA hydrolase.